Here is a 734-residue protein sequence, read N- to C-terminus: Photosystem I P700 chlorophyll a apoprotein A2 (734 aa).

The next 8 helical transmembrane spans lie at 46–69 (IFAS…FHVA), 135–158 (LYTG…LHLQ), 175–199 (LNHH…HVAI), 273–291 (IAHH…GHMY), 330–353 (LHFQ…QHMY), 369–395 (AALY…IFFI), 417–439 (AIIS…LYVH), and 517–535 (FLVH…LILV). [4Fe-4S] cluster contacts are provided by C559 and C568. 2 helical membrane passes run 575-596 (AFYL…YWHW) and 643-665 (LSVW…MFLI). The chlorophyll a site is built by H654, M662, and Y670. A phylloquinone-binding site is contributed by W671. The chain crosses the membrane as a helical span at residues 707–727 (LVGLAHFSVGYIFTYAAFLIA).

It belongs to the PsaA/PsaB family. The PsaA/B heterodimer binds the P700 chlorophyll special pair and subsequent electron acceptors. PSI consists of a core antenna complex that captures photons, and an electron transfer chain that converts photonic excitation into a charge separation. The eukaryotic PSI reaction center is composed of at least 11 subunits. P700 is a chlorophyll a/chlorophyll a' dimer, A0 is one or more chlorophyll a, A1 is one or both phylloquinones and FX is a shared 4Fe-4S iron-sulfur center. is required as a cofactor.

The protein resides in the plastid. Its subcellular location is the chloroplast thylakoid membrane. The catalysed reaction is reduced [plastocyanin] + hnu + oxidized [2Fe-2S]-[ferredoxin] = oxidized [plastocyanin] + reduced [2Fe-2S]-[ferredoxin]. Its function is as follows. PsaA and PsaB bind P700, the primary electron donor of photosystem I (PSI), as well as the electron acceptors A0, A1 and FX. PSI is a plastocyanin-ferredoxin oxidoreductase, converting photonic excitation into a charge separation, which transfers an electron from the donor P700 chlorophyll pair to the spectroscopically characterized acceptors A0, A1, FX, FA and FB in turn. Oxidized P700 is reduced on the lumenal side of the thylakoid membrane by plastocyanin. In Zygnema circumcarinatum (Green alga), this protein is Photosystem I P700 chlorophyll a apoprotein A2.